The following is a 420-amino-acid chain: UDP-N-acetylglucosamine 1-carboxyvinyltransferase 2 (420 aa).

22–23 contributes to the phosphoenolpyruvate binding site; sequence KN. Arg-92 contributes to the UDP-N-acetyl-alpha-D-glucosamine binding site. Cys-116 (proton donor) is an active-site residue. Residue Cys-116 is modified to 2-(S-cysteinyl)pyruvic acid O-phosphothioketal. UDP-N-acetyl-alpha-D-glucosamine contacts are provided by residues 121 to 125, Asp-307, and Ile-329; that span reads RPIDL.

This sequence belongs to the EPSP synthase family. MurA subfamily.

The protein localises to the cytoplasm. It carries out the reaction phosphoenolpyruvate + UDP-N-acetyl-alpha-D-glucosamine = UDP-N-acetyl-3-O-(1-carboxyvinyl)-alpha-D-glucosamine + phosphate. Its pathway is cell wall biogenesis; peptidoglycan biosynthesis. In terms of biological role, cell wall formation. Adds enolpyruvyl to UDP-N-acetylglucosamine. The polypeptide is UDP-N-acetylglucosamine 1-carboxyvinyltransferase 2 (Streptococcus thermophilus (strain ATCC BAA-250 / LMG 18311)).